The sequence spans 497 residues: Galactose/methyl galactoside import ATP-binding protein MglA (497 aa).

2 ABC transporter domains span residues leucine 6–serine 241 and valine 252–leucine 497. Glycine 38–serine 45 is an ATP binding site.

This sequence belongs to the ABC transporter superfamily. Galactose/methyl galactoside importer (TC 3.A.1.2.3) family. In terms of assembly, the complex is composed of one ATP-binding protein (MglA), two transmembrane proteins (MglC) and a solute-binding protein (MglB).

Its subcellular location is the cell inner membrane. It catalyses the reaction D-galactose(out) + ATP + H2O = D-galactose(in) + ADP + phosphate + H(+). It carries out the reaction methyl beta-D-galactoside(out) + ATP + H2O = methyl beta-D-galactoside(in) + ADP + phosphate + H(+). Its function is as follows. Part of the ABC transporter complex MglABC involved in galactose/methyl galactoside import. Responsible for energy coupling to the transport system. In Treponema denticola (strain ATCC 35405 / DSM 14222 / CIP 103919 / JCM 8153 / KCTC 15104), this protein is Galactose/methyl galactoside import ATP-binding protein MglA.